The primary structure comprises 201 residues: Recombination protein RecR (201 aa).

The C4-type zinc-finger motif lies at 60 to 75 (CKTCGNIDTQNPCTVC). The region spanning 83–178 (AIIVVVADVA…KVTRLAHGVP (96 aa)) is the Toprim domain.

Belongs to the RecR family.

May play a role in DNA repair. It seems to be involved in an RecBC-independent recombinational process of DNA repair. It may act with RecF and RecO. This is Recombination protein RecR from Rhodopseudomonas palustris (strain BisA53).